The following is a 163-amino-acid chain: Photosystem II extrinsic protein V (163 aa).

An N-terminal signal peptide occupies residues 1-26 (MLRKLILITVATVFFACQLLVNPVSA). The heme c site is built by cysteine 63, cysteine 66, histidine 67, and histidine 118.

The protein belongs to the cytochrome c family. PsbV subfamily. PSII is composed of 1 copy each of membrane proteins PsbA, PsbB, PsbC, PsbD, PsbE, PsbF, PsbH, PsbI, PsbJ, PsbK, PsbL, PsbM, PsbT, PsbX, PsbY, PsbZ, Psb30/Ycf12, peripheral proteins PsbO, CyanoQ (PsbQ), PsbU, PsbV and a large number of cofactors. It forms dimeric complexes. Heme c serves as cofactor.

It localises to the cellular thylakoid membrane. One of the extrinsic, lumenal subunits of photosystem II (PSII). PSII is a light-driven water plastoquinone oxidoreductase, using light energy to abstract electrons from H(2)O, generating a proton gradient subsequently used for ATP formation. The extrinsic proteins stabilize the structure of photosystem II oxygen-evolving complex (OEC), the ion environment of oxygen evolution and protect the OEC against heat-induced inactivation. Low-potential cytochrome c that plays a role in the OEC of PSII. The chain is Photosystem II extrinsic protein V from Aphanothece halophytica.